Reading from the N-terminus, the 356-residue chain is Histidinol-phosphate aminotransferase (356 aa).

An N6-(pyridoxal phosphate)lysine modification is found at Lys-214.

The protein belongs to the class-II pyridoxal-phosphate-dependent aminotransferase family. Histidinol-phosphate aminotransferase subfamily. As to quaternary structure, homodimer. The cofactor is pyridoxal 5'-phosphate.

It carries out the reaction L-histidinol phosphate + 2-oxoglutarate = 3-(imidazol-4-yl)-2-oxopropyl phosphate + L-glutamate. Its pathway is amino-acid biosynthesis; L-histidine biosynthesis; L-histidine from 5-phospho-alpha-D-ribose 1-diphosphate: step 7/9. This is Histidinol-phosphate aminotransferase from Escherichia coli O45:K1 (strain S88 / ExPEC).